We begin with the raw amino-acid sequence, 431 residues long: MVSALEVKSIKDSNETLISLDDYIRNTLPSQLHEILLEEFQNQDFSRGQDVSNSTHDQMIDHTLELTSDLLRNALDKQLMEVQSRTLPVRQSNQLISWSFAQGLIIGQLSVVIFLIFFVKFFIFTDASSKMDNPLPSKVSKSYLKNRRESSSIKDKRKGVLVKEESGETDLHGSLQLNDILEKTYYNVDTHSAESLDWFNVLLAQMIQQFREEAWHKDNILTSLDSFIQKRSSDLPDYLDKITITELDIGEDFPIFSNCRIQYAPNSSDKKLEAKIDIDLNDKITFGMSTRLLLNYPKKCTAALPIDLAVSMVRFQACLTVSLITAEELEFTTGNKIDDNEKNGYYLVFSFTPEYKIDFDIKSLIGARSKLENIPKISNIIEYNIKKWFAERCVEPRFQSVKLPGMWPRSKNTREEVIHKTEDESSKTPHS.

The Lumenal segment spans residues 1 to 103; sequence MVSALEVKSI…QLISWSFAQG (103 aa). A helical membrane pass occupies residues 104–124; the sequence is LIIGQLSVVIFLIFFVKFFIF. Residues 125-431 are Cytoplasmic-facing; sequence TDASSKMDNP…EDESSKTPHS (307 aa). Positions 192–404 constitute an SMP-LTD domain; it reads SAESLDWFNV…EPRFQSVKLP (213 aa). The tract at residues 412 to 431 is disordered; it reads NTREEVIHKTEDESSKTPHS.

Belongs to the MMM1 family. Homodimer. Component of the ER-mitochondria encounter structure (ERMES) or MDM complex, composed of MMM1, MDM10, MDM12 and MDM34. An MMM1 homodimer associates with one molecule of MDM12 on each side in a pairwise head-to-tail manner, and the SMP-LTD domains of MMM1 and MDM12 generate a continuous hydrophobic tunnel for phospholipid trafficking.

The protein resides in the endoplasmic reticulum membrane. In terms of biological role, component of the ERMES/MDM complex, which serves as a molecular tether to connect the endoplasmic reticulum (ER) and mitochondria. Components of this complex are involved in the control of mitochondrial shape and protein biogenesis, and function in nonvesicular lipid trafficking between the ER and mitochondria. The MDM12-MMM1 subcomplex functions in the major beta-barrel assembly pathway that is responsible for biogenesis of all outer membrane beta-barrel proteins, and acts in a late step after the SAM complex. The MDM10-MDM12-MMM1 subcomplex further acts in the TOM40-specific pathway after the action of the MDM12-MMM1 complex. Essential for establishing and maintaining the structure of mitochondria and maintenance of mtDNA nucleoids. The sequence is that of Maintenance of mitochondrial morphology protein 1 from Candida glabrata (strain ATCC 2001 / BCRC 20586 / JCM 3761 / NBRC 0622 / NRRL Y-65 / CBS 138) (Yeast).